We begin with the raw amino-acid sequence, 1373 residues long: Poly(A) RNA polymerase gld-2 homolog B (1373 aa).

The span at 75–91 (NSCHSSNSSSNTSNNNN) shows a compositional bias: low complexity. Disordered regions lie at residues 75 to 155 (NSCH…QEKQ), 175 to 340 (SDCK…FWKT), 425 to 543 (PDST…QQQK), 734 to 770 (PQQQ…FADG), 802 to 866 (CGSG…ALGS), and 880 to 928 (HPLH…PTPV). The span at 96-112 (GQQQQPLHYCNSNNSHS) shows a compositional bias: polar residues. Composition is skewed to low complexity over residues 130–152 (QQQQ…QMQQ), 180–219 (SDSN…SCSN), 228–251 (NENS…NTSS), and 274–284 (ESGSSEGAAES). 2 stretches are compositionally biased toward polar residues: residues 295–340 (CNSN…FWKT) and 430–442 (KSSS…NMIR). The span at 443-485 (SSSNGNSNFSRHQYGHQSTGSGYQQQQQRYRNAQNVYQQYQHQ) shows a compositional bias: low complexity. Residues 486 to 502 (QQHHAQQHTHPHFRRKH) show a composition bias toward basic residues. Composition is skewed to low complexity over residues 735 to 753 (QQQQ…GTSS) and 819 to 844 (AGAL…SGTS). A compositionally biased stretch (polar residues) spans 855–866 (PSISPTPSALGS). Residues 880–890 (HPLHQQHPPSH) show a composition bias toward low complexity. The segment at 945 to 1373 (RYLAQARNIE…FAETTAAHVA (429 aa)) is sufficent for interaction with Dcr-2. Mg(2+) contacts are provided by Asp1029 and Asp1031. In terms of domain architecture, PAP-associated spans 1211–1272 (TLGEHLLGFF…NIEEPFDLSN (62 aa)). The segment covering 1320–1341 (LQQHQQQFEQQLHHPISGQQRS) has biased composition (low complexity). A disordered region spans residues 1320–1359 (LQQHQQQFEQQLHHPISGQQRSAGGGGDGANPVPSTLNPD).

Belongs to the DNA polymerase type-B-like family. GLD2 subfamily. In terms of assembly, interacts with orb, an RNA-binding protein, generating an ovarian cytoplasmic polyadenylation complex. Interacts (via C-terminus) with Dcr-2. Requires Mg(2+) as cofactor. It depends on Mn(2+) as a cofactor. In terms of tissue distribution, expressed in ovaries. Not expressed in adult males.

It is found in the cytoplasm. The catalysed reaction is RNA(n) + ATP = RNA(n)-3'-adenine ribonucleotide + diphosphate. In terms of biological role, cytoplasmic poly(A) RNA polymerase that adds successive AMP monomers to the 3'-end of specific maternal RNAs (bcd, Tl, and tor), forming a poly(A) tail, during late oogenesis and early embryogenesis. In contrast to the canonical nuclear poly(A) RNA polymerase, it only adds poly(A) to selected cytoplasmic mRNAs. Required for localization of mRNAs to both poles of the egg, to recruit or maintain known centrosomal proteins with two types of microtubule organizing centers (MTOCs): the central MTOC that forms between the meiosis II tandem spindles and the centrosomes of the mitotic spindle. Required at the final stage of oogenesis for meiosis I metaphase arrest and for progression beyond this stage. Functions with the RNA-binding protein Dcr-2 to promote cytoplasmic polyadenylation and translational activation of certain mRNAs such as Tl and r2d2. As a consequence, is involved in regulating Toll immune signaling and promoting resistance to fungal infection. The sequence is that of Poly(A) RNA polymerase gld-2 homolog B (wisp) from Drosophila melanogaster (Fruit fly).